A 347-amino-acid chain; its full sequence is NADH-ubiquinone oxidoreductase chain 2 (347 aa).

Helical transmembrane passes span 3–23, 26–46, 67–87, 96–116, 149–169, 178–198, 200–220, 239–259, 274–294, and 325–345; these read PLIFIIIMFTLILGTVITMIS, WLLIWMGLEMNMFSMIPIIMM, SMLLMMGVIINLYYSGQWTIM, YMMTIALAMKLGLAPFHFWVP, LNLNLMLTLAILSILIGGWGG, IMAYSSIAHMGWMTAIIMYNT, LMMLNLVIYLMMTITMFALFI, ILTTMLLTTLLSLGGLPPLSG, NMLLLPTTMAIMALLNLYFYM, and LSPTLITLSTMLIPLTPMMLI.

The protein belongs to the complex I subunit 2 family. Core subunit of respiratory chain NADH dehydrogenase (Complex I) which is composed of 45 different subunits. Interacts with TMEM242.

Its subcellular location is the mitochondrion inner membrane. The catalysed reaction is a ubiquinone + NADH + 5 H(+)(in) = a ubiquinol + NAD(+) + 4 H(+)(out). In terms of biological role, core subunit of the mitochondrial membrane respiratory chain NADH dehydrogenase (Complex I) which catalyzes electron transfer from NADH through the respiratory chain, using ubiquinone as an electron acceptor. Essential for the catalytic activity and assembly of complex I. The polypeptide is NADH-ubiquinone oxidoreductase chain 2 (Dasypus novemcinctus (Nine-banded armadillo)).